Consider the following 213-residue polypeptide: Putative 3-methyladenine DNA glycosylase (213 aa).

The protein belongs to the DNA glycosylase MPG family.

The polypeptide is Putative 3-methyladenine DNA glycosylase (Corynebacterium jeikeium (strain K411)).